The sequence spans 332 residues: Fe(3+) dicitrate transport system permease protein FecC (332 aa).

Residues 1–7 (MTAIKHP) are Cytoplasmic-facing. Residues 8-28 (VLLWGLPVAALIIIFWLSLFC) traverse the membrane as a helical segment. Topologically, residues 29-64 (YSAIPVSGADATRALLPGHTPTLPEALVQNLRLPRS) are periplasmic. The chain crosses the membrane as a helical span at residues 65–85 (LVAVLIGASLALAGTLLQTLT). Residues 86–100 (HNPMASPSLLGINSG) lie on the Cytoplasmic side of the membrane. A helical membrane pass occupies residues 101–121 (AALAMALTSALSPTPIAGYSL). Position 122 (Ser-122) is a topological domain, periplasmic. The helical transmembrane segment at 123–143 (FIAACGGGVSWLLVMTAGGGF) threads the bilayer. Over 144 to 151 (RHTHDRNK) the chain is Cytoplasmic. The chain crosses the membrane as a helical span at residues 152 to 172 (LILAGIALSAFCMGLTRITLL). At 173 to 199 (LAEDHAYGIFYWLAGGVSHARWQDVWQ) the chain is on the periplasmic side. The helical transmembrane segment at 200-220 (LLPVVVTAVPVVLLLANQLNL) threads the bilayer. The Cytoplasmic segment spans residues 221-244 (LNLSDSTAHTLGVNLTRLRLVINM). Residues 245–265 (LVLLLVGACVSVAGPVAFIGL) form a helical membrane-spanning segment. The Periplasmic portion of the chain corresponds to 266-307 (LVPHLARFWAGFDQRNVLPVSMLLGATLMLLADVLARALAFP). The chain crosses the membrane as a helical span at residues 308-328 (GDLPAGAVLALIGSPCFVWLV). Topologically, residues 329 to 332 (RRRG) are cytoplasmic.

The protein belongs to the binding-protein-dependent transport system permease family. FecCD subfamily. In terms of assembly, the complex is composed of two ATP-binding proteins (FecE), two transmembrane proteins (FecC and FecD) and a solute-binding protein (FecB). Interacts with FecB.

The protein localises to the cell inner membrane. Part of the ABC transporter complex FecBCDE involved in citrate-dependent Fe(3+) uptake. Probably responsible for the translocation of the substrate across the membrane. The polypeptide is Fe(3+) dicitrate transport system permease protein FecC (Escherichia coli (strain K12)).